The sequence spans 193 residues: ATP synthase subunit b (193 aa).

A helical transmembrane segment spans residues P24–W44.

It belongs to the ATPase B chain family. As to quaternary structure, F-type ATPases have 2 components, F(1) - the catalytic core - and F(0) - the membrane proton channel. F(1) has five subunits: alpha(3), beta(3), gamma(1), delta(1), epsilon(1). F(0) has three main subunits: a(1), b(2) and c(10-14). The alpha and beta chains form an alternating ring which encloses part of the gamma chain. F(1) is attached to F(0) by a central stalk formed by the gamma and epsilon chains, while a peripheral stalk is formed by the delta and b chains.

Its subcellular location is the cell membrane. Functionally, f(1)F(0) ATP synthase produces ATP from ADP in the presence of a proton or sodium gradient. F-type ATPases consist of two structural domains, F(1) containing the extramembraneous catalytic core and F(0) containing the membrane proton channel, linked together by a central stalk and a peripheral stalk. During catalysis, ATP synthesis in the catalytic domain of F(1) is coupled via a rotary mechanism of the central stalk subunits to proton translocation. Its function is as follows. Component of the F(0) channel, it forms part of the peripheral stalk, linking F(1) to F(0). This chain is ATP synthase subunit b, found in Parafrankia sp. (strain EAN1pec).